Reading from the N-terminus, the 111-residue chain is Large ribosomal subunit protein eL34B (111 aa).

Residue Tyr-76 is modified to Phosphotyrosine.

Belongs to the eukaryotic ribosomal protein eL34 family. In terms of assembly, component of the large ribosomal subunit (LSU). Mature yeast ribosomes consist of a small (40S) and a large (60S) subunit. The 40S small subunit contains 1 molecule of ribosomal RNA (18S rRNA) and at least 33 different proteins. The large 60S subunit contains 3 rRNA molecules (25S, 5.8S and 5S rRNA) and at least 46 different proteins.

The protein localises to the cytoplasm. It is found in the nucleus. It localises to the nucleolus. Component of the ribosome, a large ribonucleoprotein complex responsible for the synthesis of proteins in the cell. The small ribosomal subunit (SSU) binds messenger RNAs (mRNAs) and translates the encoded message by selecting cognate aminoacyl-transfer RNA (tRNA) molecules. The large subunit (LSU) contains the ribosomal catalytic site termed the peptidyl transferase center (PTC), which catalyzes the formation of peptide bonds, thereby polymerizing the amino acids delivered by tRNAs into a polypeptide chain. The nascent polypeptides leave the ribosome through a tunnel in the LSU and interact with protein factors that function in enzymatic processing, targeting, and the membrane insertion of nascent chains at the exit of the ribosomal tunnel. The protein is Large ribosomal subunit protein eL34B (rpl3402) of Schizosaccharomyces pombe (strain 972 / ATCC 24843) (Fission yeast).